The sequence spans 287 residues: uncharacterized protein (287 aa).

The next 10 helical transmembrane spans lie at 7–28 (LLLT…RAAL), 32–54 (AIDA…AVLL), 67–86 (GWRG…YAYV), 91–113 (GTGA…LLRG), 120–139 (ALLG…LPGA), 144–163 (LGGA…YTLL), 170–192 (PLAV…LLAF), 202–224 (GLAY…WYSA), 231–253 (IQGA…LLLG), and 263–280 (ATLA…PRLG). 2 consecutive EamA domains span residues 15–136 (LAFA…FLLL) and 155–276 (LAWG…LILA).

Its subcellular location is the cell membrane. This is an uncharacterized protein from Pseudomonas aeruginosa (strain ATCC 15692 / DSM 22644 / CIP 104116 / JCM 14847 / LMG 12228 / 1C / PRS 101 / PAO1).